Reading from the N-terminus, the 223-residue chain is Immediate early response gene 2 protein (223 aa).

N-acetylmethionine is present on methionine 1. The segment at 63 to 172 (AALPSDPRLH…PPAQAEGAFP (110 aa)) is disordered. A compositionally biased stretch (basic and acidic residues) spans 69 to 78 (PRLHPPREAE). Residues 125–138 (SSLSDGGDAGLVPS) are compositionally biased toward low complexity.

This sequence belongs to the IER family. Expressed in activated T-cells (at protein level). Expression increases in metastatic tumor cells (at protein level).

It localises to the cytoplasm. Its subcellular location is the nucleus. Its function is as follows. DNA-binding protein that seems to act as a transcription factor. Involved in the regulation of neuronal differentiation, acts upon JNK-signaling pathway activation and plays a role in neurite outgrowth in hippocampal cells. May mediate with FIBP FGF-signaling in the establishment of laterality in the embryo. Promotes cell motility, seems to stimulate tumor metastasis. The polypeptide is Immediate early response gene 2 protein (Homo sapiens (Human)).